The primary structure comprises 320 residues: Cytochrome c biogenesis protein CcsA (320 aa).

Transmembrane regions (helical) follow at residues 14 to 34, 37 to 57, 68 to 88, 97 to 117, 143 to 163, 228 to 248, 263 to 283, and 289 to 309; these read SFFL…YINI, ITIL…TFLL, LSNL…IHLI, WLGI…TLSL, MMLS…ILII, VISL…VWAN, WALI…IKGW, and AIIA…VNLL.

The protein belongs to the CcmF/CycK/Ccl1/NrfE/CcsA family. May interact with Ccs1.

It is found in the plastid. It localises to the chloroplast thylakoid membrane. Functionally, required during biogenesis of c-type cytochromes (cytochrome c6 and cytochrome f) at the step of heme attachment. This chain is Cytochrome c biogenesis protein CcsA, found in Marchantia polymorpha (Common liverwort).